We begin with the raw amino-acid sequence, 130 residues long: UPF0212 protein PF1486 (130 aa).

It belongs to the UPF0212 family.

The polypeptide is UPF0212 protein PF1486 (Pyrococcus furiosus (strain ATCC 43587 / DSM 3638 / JCM 8422 / Vc1)).